We begin with the raw amino-acid sequence, 134 residues long: Transcription factor atoh7 (134 aa).

Residues 1 to 27 (MKPRRPSCADSGSDSDSRDPEKFESAM) are disordered. Positions 15-27 (SDSRDPEKFESAM) are enriched in basic and acidic residues. The bHLH domain maps to 28–80 (RRRMAANARERKRMQGLNTAFDRLRKVVPQWGQDKKLSKYETLQMALSYIMAL).

The protein localises to the nucleus. Its subcellular location is the perikaryon. It localises to the cell projection. It is found in the axon. In terms of biological role, transcription factor that binds to DNA at the consensus sequence 5'-CAG[GC]TG-3'. Involved in the differentiation of retinal ganglion cells, photoreceptor population and optic nerve development. Required for retinal circadian rhythm photoentrainment. The chain is Transcription factor atoh7 from Danio rerio (Zebrafish).